The sequence spans 65 residues: Large ribosomal subunit protein bL35 (65 aa).

Residues 1-28 (MPKLKTRKAAARRFKATGSGKIKRRKAF) are disordered.

This sequence belongs to the bacterial ribosomal protein bL35 family.

The chain is Large ribosomal subunit protein bL35 from Trichodesmium erythraeum (strain IMS101).